We begin with the raw amino-acid sequence, 387 residues long: Patatin group A-3 (387 aa).

The first 23 residues, 1–23 (MATTKSFLILIVMILATTSSTFA), serve as a signal peptide directing secretion. The PNPLA domain maps to 32 to 230 (LSIDGGGVKG…TVADPALLSV (199 aa)). Residues 36 to 41 (GGGVKG) carry the GXGXXG motif. The short motif at 75 to 79 (GTSTG) is the GXSXG element. The active-site Nucleophile is serine 77. Asparagine 115 is a glycosylation site (N-linked (GlcNAc...) asparagine). Aspartate 216 acts as the Proton acceptor in catalysis. Positions 216 to 218 (DGA) match the DGA/G motif. Positions 361–385 (ETYEEALKRFAKLLSDRKKLRANKA) form a coiled coil.

It belongs to the patatin family. In terms of tissue distribution, tuber and stolon.

Its subcellular location is the vacuole. Its function is as follows. Probable lipolytic acyl hydrolase (LAH), an activity which is thought to be involved in the response of tubers to pathogens. This is Patatin group A-3 from Solanum tuberosum (Potato).